The sequence spans 521 residues: Protein nucleotidyltransferase YdiU (521 aa).

8 residues coordinate ATP: glycine 109, glycine 111, arginine 112, lysine 131, aspartate 143, glycine 144, arginine 194, and arginine 201. Residue aspartate 270 is the Proton acceptor of the active site. The Mg(2+) site is built by asparagine 271 and aspartate 280. ATP is bound at residue aspartate 280.

Belongs to the SELO family. Requires Mg(2+) as cofactor. It depends on Mn(2+) as a cofactor.

The enzyme catalyses L-seryl-[protein] + ATP = 3-O-(5'-adenylyl)-L-seryl-[protein] + diphosphate. It carries out the reaction L-threonyl-[protein] + ATP = 3-O-(5'-adenylyl)-L-threonyl-[protein] + diphosphate. The catalysed reaction is L-tyrosyl-[protein] + ATP = O-(5'-adenylyl)-L-tyrosyl-[protein] + diphosphate. It catalyses the reaction L-histidyl-[protein] + UTP = N(tele)-(5'-uridylyl)-L-histidyl-[protein] + diphosphate. The enzyme catalyses L-seryl-[protein] + UTP = O-(5'-uridylyl)-L-seryl-[protein] + diphosphate. It carries out the reaction L-tyrosyl-[protein] + UTP = O-(5'-uridylyl)-L-tyrosyl-[protein] + diphosphate. Its function is as follows. Nucleotidyltransferase involved in the post-translational modification of proteins. It can catalyze the addition of adenosine monophosphate (AMP) or uridine monophosphate (UMP) to a protein, resulting in modifications known as AMPylation and UMPylation. In Burkholderia mallei (strain ATCC 23344), this protein is Protein nucleotidyltransferase YdiU.